An 807-amino-acid polypeptide reads, in one-letter code: Histone transcription regulator slm9 (807 aa).

WD repeat units lie at residues 62 to 100 (SFDSPISCIRFTYDGSCLAVATEAGTFLYHSEKWDKAFQ) and 102 to 140 (LSGPAYEVCWSQQGHILATSWKQISIYVKDEGLRTETIV). Positions 144 to 164 (EHADSNHQPAVSIEESKEAVE) are disordered. WD repeat units follow at residues 182–221 (GHHTFVGGLAFDPMGQFLASQSFDHTLKVWKLSTFGVEKS), 230–273 (PTGN…YDIN), 276–322 (GHQG…PMAV), and 326–367 (LSCS…EKMD). The segment at 388–437 (NKNAAADRTTSPTQGQPESPSKSILLRPPPSIASSPESKRRKCPKKFVAR) is disordered. The segment covering 395 to 409 (RTTSPTQGQPESPSK) has biased composition (polar residues). 3 positions are modified to phosphoserine: Ser406, Ser421, and Ser422. Positions 426–435 (KRRKCPKKFV) are enriched in basic residues. WD repeat units lie at residues 492–526 (DCSWFSYLPNAIVLANGTSVFWAVATEDSSIYIYS) and 528–574 (AGRL…AIHS).

This sequence belongs to the WD repeat HIR1 family. As to quaternary structure, interacts with hip1 and hip3.

It is found in the cytoplasm. The protein resides in the nucleus. Functionally, probably required for replication-independent chromatin assembly. Required for transcriptional silencing in the outer repeat (otr) centromeric repeats and the Tf2 long terminal repeat retrotransposons. May play an indirect role in the regulation of cdc2 and/or wee1 at the G2/M stage of mitosis. This is Histone transcription regulator slm9 (slm9) from Schizosaccharomyces pombe (strain 972 / ATCC 24843) (Fission yeast).